The following is a 339-amino-acid chain: tRNA-specific 2-thiouridylase MnmA (339 aa).

ATP contacts are provided by residues 6 to 13 and Met32; that span reads AMSGGVDS. Residue Cys92 is the Nucleophile of the active site. An intrachain disulfide couples Cys92 to Cys186. Gly116 serves as a coordination point for ATP. An interaction with tRNA region spans residues 134 to 136; sequence KDQ. The active-site Cysteine persulfide intermediate is Cys186. The tract at residues 288 to 289 is interaction with tRNA; sequence RY.

It belongs to the MnmA/TRMU family.

It localises to the cytoplasm. The enzyme catalyses S-sulfanyl-L-cysteinyl-[protein] + uridine(34) in tRNA + AH2 + ATP = 2-thiouridine(34) in tRNA + L-cysteinyl-[protein] + A + AMP + diphosphate + H(+). In terms of biological role, catalyzes the 2-thiolation of uridine at the wobble position (U34) of tRNA, leading to the formation of s(2)U34. The chain is tRNA-specific 2-thiouridylase MnmA from Campylobacter curvus (strain 525.92).